The chain runs to 410 residues: Phospho-N-acetylmuramoyl-pentapeptide-transferase (410 aa).

10 helical membrane-spanning segments follow: residues 23 to 43, 73 to 93, 96 to 116, 132 to 152, 215 to 235, 248 to 268, 285 to 305, 307 to 327, 332 to 352, and 387 to 407; these read YITF…TIYG, TPTM…FLFA, HNIY…IGFV, GIFK…VLYF, WAWL…SNGA, TSAV…NIIF, VFIS…SFPA, VFMG…LAIA, ILIV…IIQV, and KIVT…IVTL.

This sequence belongs to the glycosyltransferase 4 family. MraY subfamily. Requires Mg(2+) as cofactor.

It is found in the cell inner membrane. The enzyme catalyses UDP-N-acetyl-alpha-D-muramoyl-L-alanyl-gamma-D-glutamyl-meso-2,6-diaminopimeloyl-D-alanyl-D-alanine + di-trans,octa-cis-undecaprenyl phosphate = di-trans,octa-cis-undecaprenyl diphospho-N-acetyl-alpha-D-muramoyl-L-alanyl-D-glutamyl-meso-2,6-diaminopimeloyl-D-alanyl-D-alanine + UMP. Its pathway is cell wall biogenesis; peptidoglycan biosynthesis. Functionally, catalyzes the initial step of the lipid cycle reactions in the biosynthesis of the cell wall peptidoglycan: transfers peptidoglycan precursor phospho-MurNAc-pentapeptide from UDP-MurNAc-pentapeptide onto the lipid carrier undecaprenyl phosphate, yielding undecaprenyl-pyrophosphoryl-MurNAc-pentapeptide, known as lipid I. This is Phospho-N-acetylmuramoyl-pentapeptide-transferase from Flavobacterium johnsoniae (strain ATCC 17061 / DSM 2064 / JCM 8514 / BCRC 14874 / CCUG 350202 / NBRC 14942 / NCIMB 11054 / UW101) (Cytophaga johnsonae).